Here is a 342-residue protein sequence, read N- to C-terminus: Pre-mRNA-splicing factor 18 (342 aa).

This sequence belongs to the PRP18 family. As to quaternary structure, interacts with the spliceosome. Part of a complex containing U4/U6 snRNPs.

Its subcellular location is the nucleus speckle. Its function is as follows. Participates in the second step of pre-mRNA splicing. This is Pre-mRNA-splicing factor 18 (prpf18) from Xenopus laevis (African clawed frog).